Consider the following 404-residue polypeptide: Chorismate synthase (404 aa).

Residues Arg43 and Arg49 each coordinate NADP(+). FMN-binding positions include 138 to 140 (RAS), 259 to 260 (QA), Gly303, 318 to 322 (KPIST), and Arg344.

This sequence belongs to the chorismate synthase family. As to quaternary structure, homotetramer. The cofactor is FMNH2.

The enzyme catalyses 5-O-(1-carboxyvinyl)-3-phosphoshikimate = chorismate + phosphate. The protein operates within metabolic intermediate biosynthesis; chorismate biosynthesis; chorismate from D-erythrose 4-phosphate and phosphoenolpyruvate: step 7/7. Functionally, catalyzes the anti-1,4-elimination of the C-3 phosphate and the C-6 proR hydrogen from 5-enolpyruvylshikimate-3-phosphate (EPSP) to yield chorismate, which is the branch point compound that serves as the starting substrate for the three terminal pathways of aromatic amino acid biosynthesis. This reaction introduces a second double bond into the aromatic ring system. This is Chorismate synthase from Mycolicibacterium paratuberculosis (strain ATCC BAA-968 / K-10) (Mycobacterium paratuberculosis).